The primary structure comprises 202 residues: MREAMQLVPMVIEQSSRGERSFDIYSRLLRERIIFLNGEVNDTVSALVCAQLLFLEADPEKPINLYINSPGGAVTSGLAMYDTMRFIRAPVHTLCMGTARSMGSFLLMAGEPGERAALPNASILIHQPSGGFQGQASDMLIHAEEILKTKQRMTRLYAEHCGRSYEDFERGMDRDRFMTAEEALEWGLIERILKVREDTSSL.

Ser-101 serves as the catalytic Nucleophile. His-126 is an active-site residue.

The protein belongs to the peptidase S14 family. As to quaternary structure, fourteen ClpP subunits assemble into 2 heptameric rings which stack back to back to give a disk-like structure with a central cavity, resembling the structure of eukaryotic proteasomes.

It is found in the cytoplasm. It carries out the reaction Hydrolysis of proteins to small peptides in the presence of ATP and magnesium. alpha-casein is the usual test substrate. In the absence of ATP, only oligopeptides shorter than five residues are hydrolyzed (such as succinyl-Leu-Tyr-|-NHMec, and Leu-Tyr-Leu-|-Tyr-Trp, in which cleavage of the -Tyr-|-Leu- and -Tyr-|-Trp bonds also occurs).. Functionally, cleaves peptides in various proteins in a process that requires ATP hydrolysis. Has a chymotrypsin-like activity. Plays a major role in the degradation of misfolded proteins. This is ATP-dependent Clp protease proteolytic subunit 1 from Rhizobium etli (strain ATCC 51251 / DSM 11541 / JCM 21823 / NBRC 15573 / CFN 42).